The sequence spans 429 residues: Alanine aminotransferase (429 aa).

L-alanine-binding residues include Gly65 and Asn204. Lys265 is subject to N6-(pyridoxal phosphate)lysine. Arg403 is an L-alanine binding site.

The protein belongs to the class-I pyridoxal-phosphate-dependent aminotransferase family. As to quaternary structure, homodimer. Pyridoxal 5'-phosphate is required as a cofactor.

It is found in the cytoplasm. The catalysed reaction is L-alanine + 2-oxoglutarate = pyruvate + L-glutamate. The protein is Alanine aminotransferase (aspC) of Mycobacterium bovis (strain ATCC BAA-935 / AF2122/97).